Here is a 240-residue protein sequence, read N- to C-terminus: MRFIAFAVIFSAVYLCSSAFTHPRGEWTKLILTQHWPQTFCKMEHCKTDFSYWTLHGLWPNTGVRCNTSWHFNASLIEDILPEMEKFWPDLLEPSSPKFWNYEWTKHGTCAAKSESLNSEHKYFGKALELYHKFDLNSVLLKNQIVPSEKHYTLEDVEEAITSAYGVKPKIQCVHPGQGGQVQILGQIEICVDRDFQLMGCEKSSEDTWSNDLPTVPVSGQSGLSVCDHSMPVYYPPVQA.

An N-terminal signal peptide occupies residues 1–19; the sequence is MRFIAFAVIFSAVYLCSSA. An intrachain disulfide couples Cys41 to Cys46. His56 is a catalytic residue. 3 disulfide bridges follow: Cys66-Cys110, Cys173-Cys227, and Cys191-Cys201. Residues Asn67 and Asn73 are each glycosylated (N-linked (GlcNAc...) asparagine). Catalysis depends on residues Glu103 and His107.

This sequence belongs to the RNase T2 family. Ubiquitous.

Its subcellular location is the lysosome lumen. The protein localises to the endoplasmic reticulum lumen. It localises to the secreted. It catalyses the reaction a ribonucleotidyl-ribonucleotide-RNA + H2O = a 3'-end 3'-phospho-ribonucleotide-RNA + a 5'-end dephospho-ribonucleoside-RNA + H(+). Functionally, has ribonuclease activity, with higher activity at acidic pH. Probably is involved in lysosomal degradation of ribosomal RNA. This Danio rerio (Zebrafish) protein is Ribonuclease T2 (rnaset2).